We begin with the raw amino-acid sequence, 166 residues long: UPF0304 protein VIBHAR_01542 (166 aa).

It belongs to the UPF0304 family.

This Vibrio campbellii (strain ATCC BAA-1116) protein is UPF0304 protein VIBHAR_01542.